The following is a 416-amino-acid chain: Orexin/Hypocretin receptor type 1 (416 aa).

A disordered region spans residues 1–22 (MEPSATPGAQPGVPTSSGEPFH). Residues 1-46 (MEPSATPGAQPGVPTSSGEPFHLPPDYEDEFLRYLWRDYLYPKQYE) lie on the Extracellular side of the membrane. Residues 26–41 (DYEDEFLRYLWRDYLY) form a required for response to orexin-A region. The helical transmembrane segment at 47-67 (WVLIAAYVAVFLIALVGNTLV) threads the bilayer. The Cytoplasmic portion of the chain corresponds to 68 to 82 (CLAVWRNHHMRTVTN). The helical transmembrane segment at 83–105 (YFIVNLSLADVLVTAICLPASLL) threads the bilayer. Residues 106–119 (VDITESWLFGQALC) are Extracellular-facing. C119 and C202 are oxidised to a cystine. Residues 120–140 (KVIPYLQAVSVSVAVLTLSFI) traverse the membrane as a helical segment. At 141–160 (ALDRWYAICHPLLFKSTARR) the chain is on the cytoplasmic side. Residues 161–182 (ARGSILGIWAVSLAVMVPQAAV) form a helical membrane-spanning segment. Residues 183–213 (MECSSVLPELANRTRLFSVCDEHWADELYPK) lie on the Extracellular side of the membrane. An N-linked (GlcNAc...) asparagine glycan is attached at N194. A helical transmembrane segment spans residues 214–235 (IYHSCFFIVTYLAPLGLMAMAY). At 236-298 (FQIFRKLWGR…QMRARRKTAK (63 aa)) the chain is on the cytoplasmic side. The helical transmembrane segment at 299 to 321 (MLMVVLLVFALCYLPISVLNVLK) threads the bilayer. The Extracellular segment spans residues 322–336 (RVFGMFRQASDREAV). A helical membrane pass occupies residues 337-360 (YACFTFSHWLVYANSAANPIIYNF). Topologically, residues 361-416 (LSGKFREQFKAAFSCCLPGLGPGSSARHKSLSLQSRCSVSKVSEHVVLTTVTTVLS) are cytoplasmic.

This sequence belongs to the G-protein coupled receptor 1 family. In terms of tissue distribution, widely expressed.

The protein resides in the cell membrane. Moderately selective excitatory receptor for orexin-A and, with a lower affinity, for orexin-B neuropeptide. Triggers an increase in cytoplasmic Ca(2+) levels in response to orexin-A binding. This chain is Orexin/Hypocretin receptor type 1, found in Mus musculus (Mouse).